Here is a 91-residue protein sequence, read N- to C-terminus: UPF0250 protein HCH_05838 (91 aa).

This sequence belongs to the UPF0250 family.

The chain is UPF0250 protein HCH_05838 from Hahella chejuensis (strain KCTC 2396).